The primary structure comprises 334 residues: Amino acid--[acyl-carrier-protein] ligase 2 (334 aa).

Cys-131 is a binding site for Zn(2+). Residues Arg-159, Glu-161, and 168-169 contribute to the ATP site; that span reads RL. Glu-176 lines the Zn(2+) pocket. Glu-176 contributes to the an L-alpha-amino acid binding site. ATP contacts are provided by residues Lys-235 and 250–253; that span reads ACMS. Cys-279 serves as a coordination point for Zn(2+). Arg-286 is an ATP binding site.

The protein belongs to the class-II aminoacyl-tRNA synthetase family. Amino acid--[acyl-carrier-protein] ligase subfamily. In terms of assembly, homodimer. Zn(2+) is required as a cofactor.

The catalysed reaction is an L-alpha-amino acid + holo-[ACP] + ATP = an L-alpha-aminoacyl-[ACP] + AMP + diphosphate. Functionally, catalyzes the ATP-dependent activation of L-glycine and its transfer to the phosphopantetheine prosthetic group covalently attached to the vicinal carrier protein blr6284 of yet unknown function. May participate in nonribosomal peptide synthesis or related processes. L-alanine is a poor substrate whereas L-serine or D-amino acids are not substrates for ATP-dependent activation. Does not display tRNA aminoacylation activity. In Bradyrhizobium diazoefficiens (strain JCM 10833 / BCRC 13528 / IAM 13628 / NBRC 14792 / USDA 110), this protein is Amino acid--[acyl-carrier-protein] ligase 2.